The chain runs to 427 residues: Inward rectifier potassium channel 2 (427 aa).

The Cytoplasmic segment spans residues 1 to 81 (MGSVRTNRYS…IFTTCVDIRW (81 aa)). Cys-76 is subject to S-nitrosocysteine. A helical transmembrane segment spans residues 82 to 106 (RWMLVIFCLAFVLSWLFFGCVFWLI). Residues 107–128 (ALLHGDLDASKESKACVSEVNS) are Extracellular-facing. Residues 129–140 (FTAAFLFSIETQ) constitute an intramembrane region (helical; Pore-forming). Residues 141 to 147 (TTIGYGF) constitute an intramembrane region (pore-forming). The Selectivity filter motif lies at 142–147 (TIGYGF). The Extracellular segment spans residues 148-156 (RCVTDECPI). The helical transmembrane segment at 157–178 (AVFMVVFQSIVGCIIDAFIIGA) threads the bilayer. The Cytoplasmic segment spans residues 179–427 (VMAKMAKPKK…PRPLRRESEI (249 aa)). Positions 181 to 208 (AKMAKPKKRNETLVFSHNAVIAMRDGKL) are polyphosphoinositide (PIP2)-binding. Positions 383–427 (TSKEEEDSENGVPESTSTDSPPGIDLHNQASVPLEPRPLRRESEI) are disordered. Positions 425–427 (SEI) match the PDZ-binding motif.

Belongs to the inward rectifier-type potassium channel (TC 1.A.2.1) family. KCNJ2 subfamily. In terms of assembly, homotetramer. Homomultimeric and heteromultimeric association with KCNJ4/Kir2.3. Can form heteromeric channels with Kir2.6/KCNJ18. Associates, via its PDZ-recognition domain, with a complex containing LIN7A, LIN7B, LIN7C, DLG1, CASK and APBA1. In terms of processing, S-nitrosylation increases the open probability and inward rectifying currents. As to expression, prominently expressed in the central nervous system. Also found in other excitable tissues such as heart and skeletal muscle.

It localises to the cell membrane. The protein resides in the sarcolemma. Its subcellular location is the T-tubule. It catalyses the reaction K(+)(in) = K(+)(out). Activated by phosphatidylinositol 4,5 biphosphate (PtdIns(4,5)P2). In terms of biological role, inward rectifier potassium channels are characterized by a greater tendency to allow potassium to flow into the cell rather than out of it. Their voltage dependence is regulated by the concentration of extracellular potassium; as external potassium is raised, the voltage range of the channel opening shifts to more positive voltages. The inward rectification is mainly due to the blockage of outward current by internal magnesium. Can be blocked by extracellular barium and cesium. Probably participates in establishing action potential waveform and excitability of neuronal and muscle tissues. The polypeptide is Inward rectifier potassium channel 2 (Kcnj2) (Rattus norvegicus (Rat)).